We begin with the raw amino-acid sequence, 450 residues long: MASAITQCSTSELTCSICTDYLTDPVTICCGHRFCSPCLCLLWEDTLTPNCCPVCREISQQMYFKRIIFAEKQVIPTRESVPCQLSSSAMLICRRHQEIKNLICETDRSLLCFLCSQSPRHATHKHYMTREADEYYRKKLLIQMKSIWKKKQKNQRNLNRETNIIGTWEVFINLRSMMISAEYPKVCQYLREEEQKHVESLAREGRIIFQQLKRSQTRMAKMGILLREMYEKLKEMSCKADVNLPQDLGDVMKRNEFLRLAMPQPVNPQLSAWTITGVSERLNFFRVYITLDRKICSNHKLLFEDLRHLQCSLDDTDMSCNPTSTQYTSSWGAQILSSGKHYWEVDVKDSCNWVIGLCREAWTKRNDMRLDSEGIFLLLCLKVDDHFSLFSTSPLLPHYIPRPQGWLGVFLDYECGIVSFVNVAQSSLICSFLSRIFYFPLRPFICHGSK.

The segment at 15 to 56 adopts an RING-type zinc-finger fold; the sequence is CSICTDYLTDPVTICCGHRFCSPCLCLLWEDTLTPNCCPVCR. The B box-type zinc finger occupies 88–131; that stretch reads SAMLICRRHQEIKNLICETDRSLLCFLCSQSPRHATHKHYMTRE. Residues cysteine 93, histidine 96, cysteine 115, and histidine 121 each contribute to the Zn(2+) site. Residues 269 to 450 form the B30.2/SPRY domain; that stretch reads QLSAWTITGV…LRPFICHGSK (182 aa).

It belongs to the TRIM/RBCC family.

The chain is Tripartite motif-containing protein 77 (TRIM77) from Homo sapiens (Human).